Consider the following 85-residue polypeptide: Turmerin (85 aa).

The N-terminus is blocked.

Functionally, inhibition of trypsin. Has anticarcinogenic activity, prevents transformation of DMBA-treated JB6 cells. Has antipromoter activity, prevents promotion by tetradecanoyl phorbal acetate (TPA) in JB6 cells. Prevents tertiary butyl hydroperoxide-induced mutagenesis. Protects AT base pairs and shows antimutagenesis activity in TA102 and TA104 S.typhimurium mutagenesis tests. Inhibits paw edema formation induced by phospholipase A2 in Swiss Wistar mice. Prevents the release of arachidonate, the parent compound for the synthesis of prostaglandins and prostacyclins. Has antimalarial activity, kills P.falciparum. Has antivenom activity, nullifies the lethal effects of N.naja venom and inhibits phospholipase A2 present in N.naja venom. Has antifungal activity, inhibits cilia formation by A.niger. Is not toxic or allergenic. The sequence is that of Turmerin from Curcuma longa (Turmeric).